The sequence spans 238 residues: Monocyte to macrophage differentiation factor (238 aa).

The Cytoplasmic portion of the chain corresponds to 1–28; that stretch reads MRFRNRFQRFMNHRAPANGRYKPTCYEH. A helical transmembrane segment spans residues 29 to 49; it reads AANCYTHAFLIVPAIVGSALL. Residues 50 to 61 are Lumenal-facing; that stretch reads HRLSDDCWEKIT. Residues 62-82 traverse the membrane as a helical segment; it reads AWIYGMGLCALFIVSTVFHIV. The Cytoplasmic portion of the chain corresponds to 83 to 101; sequence SWKKSHLRTVEHCFHMCDR. The helical transmembrane segment at 102-122 threads the bilayer; it reads MVIYFFIAASYAPWLNLRELG. P123 is a topological domain (lumenal). Residues 124 to 144 form a helical membrane-spanning segment; sequence LASHMRWFIWLMAAGGTIYVF. Residues 145–151 are Cytoplasmic-facing; the sequence is LYHEKYK. The helical transmembrane segment at 152–172 threads the bilayer; that stretch reads VVELFFYLTMGFSPALVVTSM. Residues 173–174 are Lumenal-facing; sequence NN. Residues 175-195 traverse the membrane as a helical segment; that stretch reads TDGLQELACGGLIYCLGVVFF. Residues 196-198 lie on the Cytoplasmic side of the membrane; the sequence is KSD. A helical transmembrane segment spans residues 199 to 219; the sequence is GIIPFAHAIWHLFVATAAAVH. The Lumenal segment spans residues 220 to 238; the sequence is YYAIWKYLYRSPTDFIRHL.

This sequence belongs to the ADIPOR family.

It localises to the late endosome membrane. Its subcellular location is the lysosome membrane. Its function is as follows. Involved in the dynamics of lysosomal membranes associated with microglial activation following brain lesion. The sequence is that of Monocyte to macrophage differentiation factor from Mus musculus (Mouse).